Reading from the N-terminus, the 397-residue chain is Linalool dehydratase/isomerase (397 aa).

Positions Met-1–Ala-26 are cleaved as a signal peptide. Asp-64 functions as the Proton donor/acceptor in the catalytic mechanism. 2 cysteine pairs are disulfide-bonded: Cys-74–Cys-127 and Cys-196–Cys-205. Position 196 (Cys-196) interacts with (2E)-geraniol.

As to quaternary structure, homotetramer. Homopentamer.

The protein resides in the periplasm. The catalysed reaction is (S)-linalool = beta-myrcene + H2O. The enzyme catalyses (2E)-geraniol = (S)-linalool. It functions in the pathway terpene metabolism; monoterpene degradation. Its activity is regulated as follows. Is inhibited by molecular oxygen, high salt concentrations (NaCl, KCl, or MgCl(2)), urea, and Ti(III)citrate. Activity is not affected by EDTA. Anaerobically catalyzes the stereospecific hydration of beta-myrcene to (3S)-linalool and the isomerization of (3S)-linalool to geraniol. Is thus involved in the initial steps of the anaerobic degradation of the monoterpene beta-myrcene. Also catalyzes the reverse reactions, i.e. the isomerization of geraniol to linalool and the dehydration of linalool to myrcene. In this direction, the formation of myrcene from geraniol may be seen as a detoxification process for the monoterpene alcohol. Shows a relatively broad substrate specificity and can use various geraniol and linalool derivatives. Substrates required a specific alpha-methylallyl alcohol signature motif. Neither the monoterpenes alpha- and beta-ocimene nor the monoterpenoids citronellol and nerol can be used as substrates. The protein is Linalool dehydratase/isomerase of Castellaniella defragrans (strain DSM 12143 / CCUG 39792 / 65Phen) (Alcaligenes defragrans).